Here is a 46-residue protein sequence, read N- to C-terminus: uncharacterized protein (46 aa).

Residues 20-42 form a helical membrane-spanning segment; it reads MAMIWVVAALVIALVVGTALNYI.

The protein localises to the membrane. This is an uncharacterized protein from Bacillus subtilis (strain 168).